Here is a 357-residue protein sequence, read N- to C-terminus: UPF0283 membrane protein BMEI0952 (357 aa).

The interval methionine 1–lysine 36 is disordered. Over residues glutamate 27 to lysine 36 the composition is skewed to basic and acidic residues. 2 consecutive transmembrane segments (helical) span residues isoleucine 78–leucine 98 and leucine 109–leucine 129.

Belongs to the UPF0283 family.

It is found in the cell inner membrane. The protein is UPF0283 membrane protein BMEI0952 of Brucella melitensis biotype 1 (strain ATCC 23456 / CCUG 17765 / NCTC 10094 / 16M).